A 360-amino-acid chain; its full sequence is Actin-like protein MamK (360 aa).

Residues lysine 22, 33–34, and aspartate 89 contribute to the ATP site; that span reads TS. Glutamate 156 contacts Mg(2+). ATP contacts are provided by residues 177-179, 231-235, and glycine 302; these read AGT and KEQFS.

The protein belongs to the FtsA/MreB family. MamK subfamily. In terms of assembly, forms cytoplasmic filaments. Interacts with MamJ. Forms filaments in the absence of other magnetosome proteins and in E.coli. Filament formation in vitro requires ATP, GTP or a non-hydrolyzable ATP analog.

The protein resides in the cytoplasm. It localises to the cytoskeleton. It catalyses the reaction ATP + H2O = ADP + phosphate + H(+). Its activity is regulated as follows. Filament dynamics depend partially on MamJ. Functionally, protein with ATPase activity which forms dynamic cytoplasmic filaments that are involved in sorting, concatenating and/or correctly positioning of magnetosomes in the cell. Not absolutely necessary for assembly of short chains. Filaments grow from the both cell poles towards midcell, and are probably disassembled at the other end of the cell, a process known as treadmilling. Polymerizes in the presence of ATP, GTP or a non-hydrolyzable ATP analog. Required for correct segregation and positioning of magnetosomes following cell division. In Magnetospirillum gryphiswaldense (strain DSM 6361 / JCM 21280 / NBRC 15271 / MSR-1), this protein is Actin-like protein MamK.